Here is a 184-residue protein sequence, read N- to C-terminus: Ribosome-recycling factor (184 aa).

The protein belongs to the RRF family.

It is found in the cytoplasm. Its function is as follows. Responsible for the release of ribosomes from messenger RNA at the termination of protein biosynthesis. May increase the efficiency of translation by recycling ribosomes from one round of translation to another. The polypeptide is Ribosome-recycling factor (Clostridium botulinum (strain Langeland / NCTC 10281 / Type F)).